A 215-amino-acid chain; its full sequence is Flavin-dependent thymidylate synthase (215 aa).

Residues 1-215 enclose the ThyX domain; that stretch reads MDVRFISLTK…FPTVAAALEW (215 aa). FAD-binding positions include S56, 79 to 81, and E87; that span reads RHR. DUMP-binding positions include 76-79, 87-91, and R155; these read QILR and EFSLR. The short motif at 79-89 is the ThyX motif element; it reads RHRSFSFQEFS. H177 lines the FAD pocket. R182 is a dUMP binding site. The active-site Involved in ionization of N3 of dUMP, leading to its activation is R182.

The protein belongs to the thymidylate synthase ThyX family. In terms of assembly, homotetramer. The cofactor is FAD.

The catalysed reaction is dUMP + (6R)-5,10-methylene-5,6,7,8-tetrahydrofolate + NADPH + H(+) = dTMP + (6S)-5,6,7,8-tetrahydrofolate + NADP(+). Its pathway is pyrimidine metabolism; dTTP biosynthesis. Catalyzes the reductive methylation of 2'-deoxyuridine-5'-monophosphate (dUMP) to 2'-deoxythymidine-5'-monophosphate (dTMP) while utilizing 5,10-methylenetetrahydrofolate (mTHF) as the methyl donor, and NADPH and FADH(2) as the reductant. This chain is Flavin-dependent thymidylate synthase, found in Synechocystis sp. (strain ATCC 27184 / PCC 6803 / Kazusa).